The sequence spans 317 residues: Probable arabinan endo-1,5-alpha-L-arabinosidase C (317 aa).

An N-terminal signal peptide occupies residues 1 to 17; that stretch reads MLSFLAALSLPLALVNA. D32 acts as the Proton acceptor in catalysis. N-linked (GlcNAc...) asparagine glycosylation occurs at N190. Catalysis depends on E198, which acts as the Proton donor.

It belongs to the glycosyl hydrolase 43 family.

The protein localises to the secreted. It carries out the reaction Endohydrolysis of (1-&gt;5)-alpha-arabinofuranosidic linkages in (1-&gt;5)-arabinans.. It participates in glycan metabolism; L-arabinan degradation. Functionally, endo-1,5-alpha-L-arabinanase involved in degradation of pectin. Its preferred substrate is linear 1,5-alpha-L-arabinan. The polypeptide is Probable arabinan endo-1,5-alpha-L-arabinosidase C (abnC) (Aspergillus flavus (strain ATCC 200026 / FGSC A1120 / IAM 13836 / NRRL 3357 / JCM 12722 / SRRC 167)).